The primary structure comprises 205 residues: tRNA 2-(methylsulfanyl)-N(6)-isopentenyladenosine(37) hydroxylase (205 aa).

Fe cation is bound by residues glutamate 38, glutamate 69, histidine 72, glutamate 122, glutamate 151, and histidine 154.

The protein belongs to the MiaE family. Homodimer. The cofactor is Fe cation.

It catalyses the reaction 2-methylsulfanyl-N(6)-dimethylallyladenosine(37) in tRNA + AH2 + O2 = N(6)-[(2E)-4-hydroxy-3-methylbut-2-en-1-yl]-2-(methylsulfanyl)adenosine(37) in tRNA + A + H2O. The protein operates within tRNA modification; 2-methylthio-N-6-(cis-hydroxy)isopentenyl adenosine-tRNA biosynthesis. Its function is as follows. Involved in specific tRNA modification. Catalyzes the oxygen-dependent hydroxylation of 2-methylthio-N-6-isopentenyl adenosine (ms2i6A) to produce 2-methylthio-N-6-(cis-hydroxy)isopentenyl adenosine (ms2io6A) at position 37 in tRNAs. This Pseudomonas putida (strain ATCC 47054 / DSM 6125 / CFBP 8728 / NCIMB 11950 / KT2440) protein is tRNA 2-(methylsulfanyl)-N(6)-isopentenyladenosine(37) hydroxylase.